Reading from the N-terminus, the 400-residue chain is Argininosuccinate synthase (400 aa).

Residues 10–18 and A38 contribute to the ATP site; that span reads AYSGGVDTS. Y89 provides a ligand contact to L-citrulline. Position 119 (G119) interacts with ATP. The L-aspartate site is built by T121, N125, and D126. An L-citrulline-binding site is contributed by N125. L-citrulline is bound by residues R129, S177, S186, E262, and Y274.

The protein belongs to the argininosuccinate synthase family. Type 1 subfamily. As to quaternary structure, homotetramer.

The protein resides in the cytoplasm. The catalysed reaction is L-citrulline + L-aspartate + ATP = 2-(N(omega)-L-arginino)succinate + AMP + diphosphate + H(+). Its pathway is amino-acid biosynthesis; L-arginine biosynthesis; L-arginine from L-ornithine and carbamoyl phosphate: step 2/3. This is Argininosuccinate synthase from Nostoc punctiforme (strain ATCC 29133 / PCC 73102).